Here is an 80-residue protein sequence, read N- to C-terminus: Sec-independent protein translocase protein TatA (80 aa).

The chain crosses the membrane as a helical span at residues 1–21 (MGISMWQLLIVLLIIVLLFGT). The interval 39–80 (KKAMSDGESEEDKEPKKLSQNESRTIEGSVERNDAKTESKHS) is disordered. The span at 67-80 (SVERNDAKTESKHS) shows a compositional bias: basic and acidic residues.

It belongs to the TatA/E family. In terms of assembly, the Tat system comprises two distinct complexes: a TatABC complex, containing multiple copies of TatA, TatB and TatC subunits, and a separate TatA complex, containing only TatA subunits. Substrates initially bind to the TatABC complex, which probably triggers association of the separate TatA complex to form the active translocon.

The protein resides in the cell inner membrane. In terms of biological role, part of the twin-arginine translocation (Tat) system that transports large folded proteins containing a characteristic twin-arginine motif in their signal peptide across membranes. TatA could form the protein-conducting channel of the Tat system. The polypeptide is Sec-independent protein translocase protein TatA (Hahella chejuensis (strain KCTC 2396)).